A 412-amino-acid polypeptide reads, in one-letter code: MREMYPKKGRVILHVDMNCFFASVEIAHDSSLQGKPLAVAGNEKERKGIIITCSYEAREYGIRTTMPLWEAKRLCPQLIVRRPNFTLYREASFQMFQILSRFTEKIQPVSIDEGYLDITDCYALGSPLEIAKMIQQALLTELQLPCSIGIAPNLFLAKTASDMKKPLGITVLRKRDIPEMIWPLPVGAMHGIGEKTAEKLNDIHIQTIEQLAKGNEHIIRAKIGKHGVDLQRRAKGMDDREVDPSQMGQHKSVGNSMTFSKDMDEEKELLDMLQRLSKSVSKRLQKRTLVSYNIQIMIKYHDRRTVTRSKQLKNAIWEERDIFQAASRLWKQHWDGDSVRLLGVTATEIEWKTESVKQLDLFSFEEDAKEEPLLAVIDQINDKYGMPLLQRGSQLLRKQEKSFQQKLESKFM.

In terms of domain architecture, UmuC spans 12–193 (ILHVDMNCFF…LPVGAMHGIG (182 aa)). Residues Asp16 and Asp112 each coordinate Mg(2+). The active site involves Glu113. Residues 235 to 257 (KGMDDREVDPSQMGQHKSVGNSM) form a disordered region. Residues 246-257 (QMGQHKSVGNSM) show a composition bias toward polar residues.

The protein belongs to the DNA polymerase type-Y family. As to quaternary structure, monomer. Mg(2+) serves as cofactor.

The protein localises to the cytoplasm. The enzyme catalyses DNA(n) + a 2'-deoxyribonucleoside 5'-triphosphate = DNA(n+1) + diphosphate. Poorly processive, error-prone DNA polymerase involved in untargeted mutagenesis. Copies undamaged DNA at stalled replication forks, which arise in vivo from mismatched or misaligned primer ends. These misaligned primers can be extended by PolIV. Exhibits no 3'-5' exonuclease (proofreading) activity. May be involved in translesional synthesis, in conjunction with the beta clamp from PolIII. This is DNA polymerase IV from Bacillus anthracis.